The sequence spans 577 residues: Aspartate--tRNA(Asp/Asn) ligase (577 aa).

Glu171 contacts L-aspartate. The tract at residues 195 to 198 is aspartate; sequence QLFK. L-aspartate is bound at residue Arg217. ATP is bound by residues 217–219 and Gln226; that span reads RDE. His444 contacts L-aspartate. Glu474 is a binding site for ATP. Arg481 contacts L-aspartate. 526–529 is a binding site for ATP; that stretch reads GFDR.

Belongs to the class-II aminoacyl-tRNA synthetase family. Type 1 subfamily. Homodimer.

The protein resides in the cytoplasm. It carries out the reaction tRNA(Asx) + L-aspartate + ATP = L-aspartyl-tRNA(Asx) + AMP + diphosphate. Aspartyl-tRNA synthetase with relaxed tRNA specificity since it is able to aspartylate not only its cognate tRNA(Asp) but also tRNA(Asn). Is 1.7 times more efficient at aminoacylating tRNA(Asp) over tRNA(Asn). Reaction proceeds in two steps: L-aspartate is first activated by ATP to form Asp-AMP and then transferred to the acceptor end of tRNA(Asp/Asn). This Helicobacter pylori (strain ATCC 700392 / 26695) (Campylobacter pylori) protein is Aspartate--tRNA(Asp/Asn) ligase.